We begin with the raw amino-acid sequence, 448 residues long: Exodeoxyribonuclease 7 large subunit (448 aa).

This sequence belongs to the XseA family. Heterooligomer composed of large and small subunits.

The protein resides in the cytoplasm. It carries out the reaction Exonucleolytic cleavage in either 5'- to 3'- or 3'- to 5'-direction to yield nucleoside 5'-phosphates.. Its function is as follows. Bidirectionally degrades single-stranded DNA into large acid-insoluble oligonucleotides, which are then degraded further into small acid-soluble oligonucleotides. The chain is Exodeoxyribonuclease 7 large subunit from Tolumonas auensis (strain DSM 9187 / NBRC 110442 / TA 4).